Reading from the N-terminus, the 256-residue chain is Sugar fermentation stimulation protein homolog (256 aa).

Residues 128–141 are compositionally biased toward low complexity; the sequence is TGSTDTSFSGTPPT. Positions 128-149 are disordered; that stretch reads TGSTDTSFSGTPPTNTEPANTK.

The protein belongs to the SfsA family.

This is Sugar fermentation stimulation protein homolog from Shewanella sediminis (strain HAW-EB3).